Here is a 1352-residue protein sequence, read N- to C-terminus: Spike glycoprotein (1352 aa).

A signal peptide spans Met1–Leu12. At Thr13–Pro1297 the chain is on the extracellular side. In terms of domain architecture, BetaCoV S1-NTD spans Gln22–Tyr359. Residues Asn29, Asn73, Asn111, Asn132, Asn167, Asn174, Asn244, and Asn250 are each glycosylated (N-linked (GlcNAc...) asparagine; by host). Cys193 and Cys245 are oxidised to a cystine. 2 cysteine pairs are disulfide-bonded: Cys347-Cys357 and Cys391-Cys415. One can recognise a BetaCoV S1-CTD domain in the interval Gln389–Met585. A glycan (N-linked (GlcNAc...) asparagine; by host) is linked at Asn418. 2 cysteine pairs are disulfide-bonded: Cys433/Cys486 and Cys445/Cys583. Residues Asn495, Asn590, Asn617, Asn716, Asn760, Asn771, Asn782, and Asn867 are each glycosylated (N-linked (GlcNAc...) asparagine; by host). Fusion peptide regions lie at residues Ser885–Tyr906 and Gln904–Val926. Cys909 and Cys922 are disulfide-bonded. A heptad repeat 1 region spans residues Gln991–Phe1041. Positions Gln1020–Ile1064 form a coiled coil. N-linked (GlcNAc...) asparagine; by host glycans are attached at residues Asn1145, Asn1172, Asn1214, Asn1226, Asn1242, Asn1257, Asn1278, and Asn1289. The segment at Gly1247–Glu1286 is heptad repeat 2. Residues Thr1259–Leu1287 adopt a coiled-coil conformation. A helical transmembrane segment spans residues Trp1298–Ile1318. Residues Leu1319–His1352 lie on the Cytoplasmic side of the membrane. A KxHxx motif is present at residues His1350–His1352.

It belongs to the betacoronaviruses spike protein family. As to quaternary structure, homotrimer; each monomer consists of a S1 and a S2 subunit. The resulting peplomers protrude from the virus surface as spikes. In terms of processing, specific enzymatic cleavages in vivo yield mature proteins. The precursor is processed into S1 and S2 by host cell furin or another cellular protease to yield the mature S1 and S2 proteins. Additionally, a second cleavage leads to the release of a fusion peptide after viral attachment to host cell receptor. Post-translationally, the cytoplasmic Cys-rich domain is palmitoylated. Spike glycoprotein is digested within host endosomes.

The protein resides in the virion membrane. It is found in the host endoplasmic reticulum-Golgi intermediate compartment membrane. Its subcellular location is the host cell membrane. In terms of biological role, attaches the virion to the cell membrane by interacting with host receptor, initiating the infection. Functionally, mediates fusion of the virion and cellular membranes by acting as a class I viral fusion protein. Under the current model, the protein has at least three conformational states: pre-fusion native state, pre-hairpin intermediate state, and post-fusion hairpin state. During viral and target cell membrane fusion, the coiled coil regions (heptad repeats) assume a trimer-of-hairpins structure, positioning the fusion peptide in close proximity to the C-terminal region of the ectodomain. The formation of this structure appears to drive apposition and subsequent fusion of viral and target cell membranes. Acts as a viral fusion peptide which is unmasked following S2 cleavage occurring upon virus endocytosis. The sequence is that of Spike glycoprotein from Bat coronavirus HKU5 (BtCoV).